A 305-amino-acid polypeptide reads, in one-letter code: Phosphatidylinositol:ceramide inositolphosphotransferase 2 (305 aa).

Transmembrane regions (helical) follow at residues 34-54 (LLAGLICQYIHGLAAKGVHYI), 81-101 (ETVFTSVFLSFFLWTFHPFIL), 105-125 (KIYTVLIWCRVLAFLVACQFL), 168-188 (VMYGCGDLIFSSHMIFTLVFV), 198-218 (RFIKLFGWLTAIVQSLLIIAS), and 221-241 (HYSVDVVVAWYTVNLVVFCLD). The active site involves histidine 180. Active-site residues include histidine 221 and aspartate 225.

It belongs to the sphingomyelin synthase family. Expressed in leaves, roots, stems, flowers and siliques.

Its subcellular location is the golgi apparatus. It is found in the trans-Golgi network membrane. It carries out the reaction an N-(2R-hydroxy-very-long-chain fatty acyl)-(R)-4-hydroxysphingoid base + a 1,2-diacyl-sn-glycero-3-phospho-(1D-myo-inositol) = a 1D-myo-inositol-1-phospho-N-[(R)-2-hydroxy-very-long-chain fatty acyl]-(R)-4-hydroxysphingoid base + a 1,2-diacyl-sn-glycerol. Its pathway is sphingolipid metabolism. Catalyzes the transfer of the phosphorylinositol group from phosphatidylinositol (PI) to phytoceramide, an essential step in sphingolipid biosynthesis. May play an important role in modulating plant programmed cell death (PCD) associated with defense (e.g. toward Golovinomyces cichoracearum) by promoting sphingolipid metabolism and thus regulating ceramide accumulation. The protein is Phosphatidylinositol:ceramide inositolphosphotransferase 2 of Arabidopsis thaliana (Mouse-ear cress).